The chain runs to 706 residues: MGKDSQNYYGKHGTPQKYDPTFKGPIYNRGCTDVICCVLLFLAIVGYVAVGIIAWTHGDPRKVIYPTDSRGEFCGQKGTKNADKPFLFYFNIVKCANPLVLLEFHCPTPQICVKQCPDRYLTLLSARNTRDFDYYKQFCVPGFQNNKGVTEILRDGECPAVITPSKPLAQRCFPAIHASKGVLMVGNETTYEDGHGARKNITDLVEGAKKANKILEARQLAMQIFEDYTVSWYWIIIGLVIAMVLSLLFIVLLRFLAGIMVWVMIVMVILVLGYGIFHCYMEYSRLRGEAGSDVSLVDLGFQTDLRVYLHLRQTWMAFMIILSILEVVIILLLIFLRKRILIAIALIKEASRAVGHVMCSLLYPLVTFFLLCLCIAYWASTSVFLSTSNTAVYKVVDDTACPLLRKTCNPETFPLRNESLQCPTARCQFAFYGGESTYHRALLGLQIFNAFMFFWLANFVLALGQVTLAGAFASYYWAMRKPDDMPAFPLFSAFGRALRYHTGSLAFGSLILAIVQIIRVMLEYLDQRLKAAQNKFAKFLMVCLKCCFWCLEKFIKFLNRNAYIMIAIYGTNFCTSARNAFFLLMRNIIRVAVLDKVTDFLFLLGKLLIVGSVGILAFFFFTHRIRIVQDTAPPLNYYWVPILTVIIGSYLIAHGFFSVYGMCVDTLFLCFLEDLERNDGSAERPYFMSSTLKKLLNKTNKKVAES.

The Cytoplasmic segment spans residues 1–33 (MGKDSQNYYGKHGTPQKYDPTFKGPIYNRGCTD). Thr-14 is modified (phosphothreonine). The helical transmembrane segment at 34-54 (VICCVLLFLAIVGYVAVGIIA) threads the bilayer. At 55–232 (WTHGDPRKVI…QIFEDYTVSW (178 aa)) the chain is on the extracellular side. 2 N-linked (GlcNAc...) asparagine glycosylation sites follow: Asn-187 and Asn-200. A helical membrane pass occupies residues 233-253 (YWIIIGLVIAMVLSLLFIVLL). The Cytoplasmic segment spans residues 254 to 256 (RFL). Residues 257 to 277 (AGIMVWVMIVMVILVLGYGIF) form a helical membrane-spanning segment. Topologically, residues 278-315 (HCYMEYSRLRGEAGSDVSLVDLGFQTDLRVYLHLRQTW) are extracellular. Residues 316–336 (MAFMIILSILEVVIILLLIFL) form a helical membrane-spanning segment. At 337 to 364 (RKRILIAIALIKEASRAVGHVMCSLLYP) the chain is on the cytoplasmic side. A helical membrane pass occupies residues 365-385 (LVTFFLLCLCIAYWASTSVFL). Over 386–454 (STSNTAVYKV…LQIFNAFMFF (69 aa)) the chain is Extracellular. A glycan (N-linked (GlcNAc...) asparagine) is linked at Asn-417. The chain crosses the membrane as a helical span at residues 455–477 (WLANFVLALGQVTLAGAFASYYW). Over 478–504 (AMRKPDDMPAFPLFSAFGRALRYHTGS) the chain is Cytoplasmic. Residues 505–525 (LAFGSLILAIVQIIRVMLEYL) traverse the membrane as a helical segment. Residues 526–563 (DQRLKAAQNKFAKFLMVCLKCCFWCLEKFIKFLNRNAY) lie on the Extracellular side of the membrane. A helical membrane pass occupies residues 564–584 (IMIAIYGTNFCTSARNAFFLL). At 585–599 (MRNIIRVAVLDKVTD) the chain is on the cytoplasmic side. A helical membrane pass occupies residues 600–620 (FLFLLGKLLIVGSVGILAFFF). Over 621–638 (FTHRIRIVQDTAPPLNYY) the chain is Extracellular. A helical membrane pass occupies residues 639–659 (WVPILTVIIGSYLIAHGFFSV). Residues 660–706 (YGMCVDTLFLCFLEDLERNDGSAERPYFMSSTLKKLLNKTNKKVAES) are Cytoplasmic-facing.

The protein belongs to the CTL (choline transporter-like) family. In terms of assembly, interacts with COCH. Glycosylated, glycosylation differs from tissue to tissue. The molecular mass of the mature glycosylated protein is highest in kidney, followed by lung, colon and spleen, then brain and tongue. Expressed at high levels in lung, colon, inner ear and spleen (at protein level). Progressively lower levels in brain, tongue, liver and kidney (at protein level). In the kidney, prominent expression in glomeruli in the lining of Bowman's capsule and on the mesangial cells adjacent to the vessels within the glomerulus (at protein level). Strongly expressed on the membranes of splenocytes and in lung parenchyme (at protein level). As to expression, expressed at higher levels than isoform 2 in colon, heart, kidney, lung, cochlea, tongue and muscle, as well as in the inner ear. In terms of tissue distribution, predominantly expressed in brain, liver and spleen.

Its subcellular location is the cell membrane. It localises to the mitochondrion outer membrane. The enzyme catalyses choline(out) + n H(+)(in) = choline(in) + n H(+)(out). The catalysed reaction is ethanolamine(out) + n H(+)(in) = ethanolamine(in) + n H(+)(out). Its function is as follows. Choline/H+ antiporter, mainly in mitochodria. Also acts as a low-affinity ethanolamine/H+ antiporter, regulating the supply of extracellular ethanolamine (Etn) for the CDP-Etn pathway, redistribute intracellular Etn and balance the CDP-Cho and CDP-Etn arms of the Kennedy pathway. The protein is Choline transporter-like protein 2 (Slc44a2) of Mus musculus (Mouse).